A 320-amino-acid polypeptide reads, in one-letter code: Ferrochelatase (320 aa).

2 residues coordinate Fe cation: His-194 and Glu-275.

This sequence belongs to the ferrochelatase family.

It localises to the cytoplasm. It catalyses the reaction heme b + 2 H(+) = protoporphyrin IX + Fe(2+). It participates in porphyrin-containing compound metabolism; protoheme biosynthesis; protoheme from protoporphyrin-IX: step 1/1. Functionally, catalyzes the ferrous insertion into protoporphyrin IX. This is Ferrochelatase from Xylella fastidiosa (strain M12).